The following is a 75-amino-acid chain: Penaeidin-3l (75 aa).

Residues 1–19 (MRLVVCLVFLASFALVCQG) form the signal peptide. Pyrrolidone carboxylic acid is present on glutamine 20. Disulfide bonds link cysteine 44–cysteine 59, cysteine 48–cysteine 66, and cysteine 60–cysteine 67. At serine 74 the chain carries Serine amide.

Belongs to the penaeidin family.

The protein localises to the cytoplasmic granule. Functionally, antibacterial and antifungal activity. Presents chitin-binding activity. The chain is Penaeidin-3l from Penaeus setiferus (Atlantic white shrimp).